We begin with the raw amino-acid sequence, 200 residues long: Ribosomal RNA large subunit methyltransferase E (200 aa).

S-adenosyl-L-methionine contacts are provided by glycine 51, tryptophan 53, aspartate 71, aspartate 90, and aspartate 112. The active-site Proton acceptor is lysine 151.

Belongs to the class I-like SAM-binding methyltransferase superfamily. RNA methyltransferase RlmE family.

Its subcellular location is the cytoplasm. The catalysed reaction is uridine(2552) in 23S rRNA + S-adenosyl-L-methionine = 2'-O-methyluridine(2552) in 23S rRNA + S-adenosyl-L-homocysteine + H(+). In terms of biological role, specifically methylates the uridine in position 2552 of 23S rRNA at the 2'-O position of the ribose in the fully assembled 50S ribosomal subunit. The sequence is that of Ribosomal RNA large subunit methyltransferase E from Treponema pallidum (strain Nichols).